The chain runs to 177 residues: Alkyl hydroperoxide reductase AhpD (177 aa).

Cysteine 131 acts as the Proton donor in catalysis. Cysteine 131 and cysteine 134 are oxidised to a cystine. Residue cysteine 134 is the Cysteine sulfenic acid (-SOH) intermediate of the active site.

This sequence belongs to the AhpD family. Homotrimer.

It catalyses the reaction N(6)-[(R)-dihydrolipoyl]-L-lysyl-[lipoyl-carrier protein] + a hydroperoxide = N(6)-[(R)-lipoyl]-L-lysyl-[lipoyl-carrier protein] + an alcohol + H2O. Its function is as follows. Antioxidant protein with alkyl hydroperoxidase activity. Required for the reduction of the AhpC active site cysteine residues and for the regeneration of the AhpC enzyme activity. This chain is Alkyl hydroperoxide reductase AhpD, found in Streptomyces avermitilis (strain ATCC 31267 / DSM 46492 / JCM 5070 / NBRC 14893 / NCIMB 12804 / NRRL 8165 / MA-4680).